Here is a 218-residue protein sequence, read N- to C-terminus: Adenylate kinase (218 aa).

ATP is bound at residue 10 to 15; the sequence is GAGKGT. Residues 30-59 form an NMP region; that stretch reads STGDMLRAAVKAGTPLGLEAKKVMDAGGLV. AMP is bound by residues threonine 31, arginine 36, 57–59, 85–88, and glutamine 92; these read GLV and GFPR. The segment at 122-159 is LID; sequence GRRVHPASGRVYHTKYNPPKVEGKDDETGDELVQRDDD. Residues arginine 123 and 132 to 133 each bind ATP; that span reads VY. The segment at 139–160 is disordered; it reads PPKVEGKDDETGDELVQRDDDQ. AMP contacts are provided by arginine 156 and arginine 167. An ATP-binding site is contributed by glycine 203.

Belongs to the adenylate kinase family. As to quaternary structure, monomer.

The protein localises to the cytoplasm. The catalysed reaction is AMP + ATP = 2 ADP. The protein operates within purine metabolism; AMP biosynthesis via salvage pathway; AMP from ADP: step 1/1. Catalyzes the reversible transfer of the terminal phosphate group between ATP and AMP. Plays an important role in cellular energy homeostasis and in adenine nucleotide metabolism. In Alcanivorax borkumensis (strain ATCC 700651 / DSM 11573 / NCIMB 13689 / SK2), this protein is Adenylate kinase.